Consider the following 286-residue polypeptide: ATP synthase gamma chain (286 aa).

This sequence belongs to the ATPase gamma chain family. In terms of assembly, F-type ATPases have 2 components, CF(1) - the catalytic core - and CF(0) - the membrane proton channel. CF(1) has five subunits: alpha(3), beta(3), gamma(1), delta(1), epsilon(1). CF(0) has three main subunits: a, b and c.

The protein resides in the cell inner membrane. Functionally, produces ATP from ADP in the presence of a proton gradient across the membrane. The gamma chain is believed to be important in regulating ATPase activity and the flow of protons through the CF(0) complex. The chain is ATP synthase gamma chain from Alcanivorax borkumensis (strain ATCC 700651 / DSM 11573 / NCIMB 13689 / SK2).